The primary structure comprises 473 residues: 3-isopropylmalate dehydratase large subunit (473 aa).

Positions 348, 413, and 416 each coordinate [4Fe-4S] cluster.

The protein belongs to the aconitase/IPM isomerase family. LeuC type 1 subfamily. As to quaternary structure, heterodimer of LeuC and LeuD. [4Fe-4S] cluster serves as cofactor.

The enzyme catalyses (2R,3S)-3-isopropylmalate = (2S)-2-isopropylmalate. Its pathway is amino-acid biosynthesis; L-leucine biosynthesis; L-leucine from 3-methyl-2-oxobutanoate: step 2/4. Its function is as follows. Catalyzes the isomerization between 2-isopropylmalate and 3-isopropylmalate, via the formation of 2-isopropylmaleate. This chain is 3-isopropylmalate dehydratase large subunit, found in Parvibaculum lavamentivorans (strain DS-1 / DSM 13023 / NCIMB 13966).